The chain runs to 363 residues: Elongation factor Tu, chloroplastic (363 aa).

Residues 1–189 (TLTAAITMAL…NVDEYIPTPE (189 aa)) enclose the tr-type G domain. GTP-binding positions include 55 to 59 (DCPGH) and 110 to 113 (NKED).

The protein belongs to the TRAFAC class translation factor GTPase superfamily. Classic translation factor GTPase family. EF-Tu/EF-1A subfamily.

It localises to the plastid. It is found in the chloroplast. The catalysed reaction is GTP + H2O = GDP + phosphate + H(+). Functionally, GTP hydrolase that promotes the GTP-dependent binding of aminoacyl-tRNA to the A-site of ribosomes during protein biosynthesis. In Gymnochlora stellata, this protein is Elongation factor Tu, chloroplastic (tufA).